An 81-amino-acid polypeptide reads, in one-letter code: Photosystem I iron-sulfur center (81 aa).

4Fe-4S ferredoxin-type domains follow at residues 2 to 31 and 39 to 68; these read AHSV…MVPW and IASA…VRVY. 8 residues coordinate [4Fe-4S] cluster: Cys-11, Cys-14, Cys-17, Cys-21, Cys-48, Cys-51, Cys-54, and Cys-58.

In terms of assembly, the eukaryotic PSI reaction center is composed of at least 11 subunits. [4Fe-4S] cluster serves as cofactor.

The protein resides in the plastid. It localises to the chloroplast thylakoid membrane. The enzyme catalyses reduced [plastocyanin] + hnu + oxidized [2Fe-2S]-[ferredoxin] = oxidized [plastocyanin] + reduced [2Fe-2S]-[ferredoxin]. In terms of biological role, apoprotein for the two 4Fe-4S centers FA and FB of photosystem I (PSI); essential for photochemical activity. FB is the terminal electron acceptor of PSI, donating electrons to ferredoxin. The C-terminus interacts with PsaA/B/D and helps assemble the protein into the PSI complex. Required for binding of PsaD and PsaE to PSI. PSI is a plastocyanin/cytochrome c6-ferredoxin oxidoreductase, converting photonic excitation into a charge separation, which transfers an electron from the donor P700 chlorophyll pair to the spectroscopically characterized acceptors A0, A1, FX, FA and FB in turn. The polypeptide is Photosystem I iron-sulfur center (Pyropia yezoensis (Susabi-nori)).